Consider the following 351-residue polypeptide: Histidinol-phosphate aminotransferase (351 aa).

Lysine 214 bears the N6-(pyridoxal phosphate)lysine mark.

This sequence belongs to the class-II pyridoxal-phosphate-dependent aminotransferase family. Histidinol-phosphate aminotransferase subfamily. The cofactor is pyridoxal 5'-phosphate.

It carries out the reaction L-histidinol phosphate + 2-oxoglutarate = 3-(imidazol-4-yl)-2-oxopropyl phosphate + L-glutamate. It participates in amino-acid biosynthesis; L-histidine biosynthesis; L-histidine from 5-phospho-alpha-D-ribose 1-diphosphate: step 7/9. The polypeptide is Histidinol-phosphate aminotransferase (Methanosphaerula palustris (strain ATCC BAA-1556 / DSM 19958 / E1-9c)).